We begin with the raw amino-acid sequence, 262 residues long: Acyl-[acyl-carrier-protein]--UDP-N-acetylglucosamine O-acyltransferase (262 aa).

It belongs to the transferase hexapeptide repeat family. LpxA subfamily. In terms of assembly, homotrimer.

The protein resides in the cytoplasm. The catalysed reaction is a (3R)-hydroxyacyl-[ACP] + UDP-N-acetyl-alpha-D-glucosamine = a UDP-3-O-[(3R)-3-hydroxyacyl]-N-acetyl-alpha-D-glucosamine + holo-[ACP]. It functions in the pathway glycolipid biosynthesis; lipid IV(A) biosynthesis; lipid IV(A) from (3R)-3-hydroxytetradecanoyl-[acyl-carrier-protein] and UDP-N-acetyl-alpha-D-glucosamine: step 1/6. Functionally, involved in the biosynthesis of lipid A, a phosphorylated glycolipid that anchors the lipopolysaccharide to the outer membrane of the cell. This is Acyl-[acyl-carrier-protein]--UDP-N-acetylglucosamine O-acyltransferase from Salmonella arizonae (strain ATCC BAA-731 / CDC346-86 / RSK2980).